A 266-amino-acid chain; its full sequence is DNA damage-regulated autophagy modulator protein 2 (266 aa).

A run of 6 helical transmembrane segments spans residues 8–28 (LSFL…FSYI), 53–73 (KCLF…TIYV), 92–112 (NKAG…VANF), 117–137 (FFAV…LYMF), 160–180 (LLLV…SSLL), and 207–227 (ITTA…LTYI).

This sequence belongs to the DRAM/TMEM150 family.

The protein localises to the lysosome membrane. It is found in the photoreceptor inner segment. The protein resides in the apical cell membrane. In terms of biological role, plays a role in the initiation of autophagy. In the retina, might be involved in the process of photoreceptor cells renewal and recycling to preserve visual function. Induces apoptotic cell death when coexpressed with DRAM1. The chain is DNA damage-regulated autophagy modulator protein 2 (DRAM2) from Bos taurus (Bovine).